Consider the following 33-residue polypeptide: Protamine TP16 (33 aa).

Residues 1-33 (MPRRRRSSSRPVRRRRRARVSRRRRRRGRRRRR) form a disordered region.

Testis.

It localises to the nucleus. Its subcellular location is the chromosome. Protamines substitute for histones in the chromatin of sperm during the haploid phase of spermatogenesis. They compact sperm DNA into a highly condensed, stable and inactive complex. The chain is Protamine TP16 from Oncorhynchus mykiss (Rainbow trout).